A 174-amino-acid polypeptide reads, in one-letter code: Probable N-acetyltransferase Rv2775 (174 aa).

One can recognise an N-acetyltransferase domain in the interval 6 to 172 (IRIRAAKPID…VGYRLYRSAP (167 aa)).

Belongs to the acetyltransferase family.

This chain is Probable N-acetyltransferase Rv2775, found in Mycobacterium tuberculosis (strain ATCC 25618 / H37Rv).